The following is a 259-amino-acid chain: MRQATRKGLMTMAAATGVIAAAGGAAHADSGAHGTSSGSPGVLSGNTVQAPVHVPVNVCGNTVDVVGVLNPAMGNACANQGGGASGGHGGHGGHGGYGDSGGEGGSHGGSHAGGHATDSPGVGSGNHVEVPIDVPVNVCGNSIDVVGALNPTTGNDCGNGGGGDHSTPPGDHETPPGEPHNPGNPGNPDTPDKPSGPDDETPGDSTDGNRPGAQTVDQPRGDAALAETGSDLPLGLALPVGAGALLAGTVLYRKARASV.

Positions 1 to 28 are cleaved as a signal peptide; it reads MRQATRKGLMTMAAATGVIAAAGGAAHA. The 41-residue stretch at 39-79 folds into the Chaplin 1 domain; that stretch reads SPGVLSGNTVQAPVHVPVNVCGNTVDVVGVLNPAMGNACAN. Residues 84–112 show a composition bias toward gly residues; that stretch reads ASGGHGGHGGHGGYGDSGGEGGSHGGSHA. 2 disordered regions span residues 84 to 129 and 154 to 227; these read ASGG…NHVE and GNDC…ALAE. A Chaplin 2 domain is found at 119 to 159; that stretch reads SPGVGSGNHVEVPIDVPVNVCGNSIDVVGALNPTTGNDCGN. The segment covering 180 to 189 has biased composition (low complexity); it reads HNPGNPGNPD. An LPXTG sorting signal motif is present at residues 225–229; it reads LAETG. The residue at position 228 (T228) is a Pentaglycyl murein peptidoglycan amidated threonine. Positions 229-259 are cleaved as a propeptide — removed by sortase; the sequence is GSDLPLGLALPVGAGALLAGTVLYRKARASV.

Belongs to the chaplin family. Long chaplin subfamily.

It is found in the secreted. The protein localises to the cell wall. Its function is as follows. One of 8 partially redundant surface-active proteins required for efficient formation of aerial mycelium; the short chaplins assemble into a hydrophobic, amyloidal fibrillar surface layer that envelopes and protects aerial hyphae and spores, presumably anchored to the long chaplins. Chaplins have an overlapping function with the surface-active SapB peptide; chaplins are essential on minimal medium while on rich medium both chaplins and SapB are required for efficient aerial hyphae formation. A minimal chaplin strain capable of forming aerial mycelium/hyphae on minimal medium contains ChpC, ChpE and ChpH. The strain also has restored rodlet formation on the hyphae surface. The long chaplins (ChpA, ChpB, ChpC) are not absolutely necessary for short chaplin localization or rodlet formation, but probably play a role in initiating aerial hyphae development. Chaplins are also involved in cell attachment to a hydrophobic surface. The sequence is that of Chaplin-C from Streptomyces coelicolor (strain ATCC BAA-471 / A3(2) / M145).